We begin with the raw amino-acid sequence, 144 residues long: Nucleoside diphosphate kinase (144 aa).

K11, F59, R87, T93, R104, and N114 together coordinate ATP. H117 serves as the catalytic Pros-phosphohistidine intermediate.

It belongs to the NDK family. Homotetramer. It depends on Mg(2+) as a cofactor.

It localises to the cytoplasm. It catalyses the reaction a 2'-deoxyribonucleoside 5'-diphosphate + ATP = a 2'-deoxyribonucleoside 5'-triphosphate + ADP. It carries out the reaction a ribonucleoside 5'-diphosphate + ATP = a ribonucleoside 5'-triphosphate + ADP. In terms of biological role, major role in the synthesis of nucleoside triphosphates other than ATP. The ATP gamma phosphate is transferred to the NDP beta phosphate via a ping-pong mechanism, using a phosphorylated active-site intermediate. This Baumannia cicadellinicola subsp. Homalodisca coagulata protein is Nucleoside diphosphate kinase.